Reading from the N-terminus, the 250-residue chain is 3-deoxy-manno-octulosonate cytidylyltransferase (250 aa).

Belongs to the KdsB family.

It is found in the cytoplasm. The enzyme catalyses 3-deoxy-alpha-D-manno-oct-2-ulosonate + CTP = CMP-3-deoxy-beta-D-manno-octulosonate + diphosphate. Its pathway is nucleotide-sugar biosynthesis; CMP-3-deoxy-D-manno-octulosonate biosynthesis; CMP-3-deoxy-D-manno-octulosonate from 3-deoxy-D-manno-octulosonate and CTP: step 1/1. The protein operates within bacterial outer membrane biogenesis; lipopolysaccharide biosynthesis. Its function is as follows. Activates KDO (a required 8-carbon sugar) for incorporation into bacterial lipopolysaccharide in Gram-negative bacteria. This is 3-deoxy-manno-octulosonate cytidylyltransferase from Syntrophotalea carbinolica (strain DSM 2380 / NBRC 103641 / GraBd1) (Pelobacter carbinolicus).